A 375-amino-acid chain; its full sequence is Odorant receptor 49b (375 aa).

At 1-28 (MFEDIQLIYMNIKILRFWALLYDKNLRR) the chain is on the cytoplasmic side. The helical transmembrane segment at 29-49 (YVCIGLASFHIFTQIVYMMST) threads the bilayer. Residues 50-60 (NEGLTGIIRNS) lie on the Extracellular side of the membrane. The chain crosses the membrane as a helical span at residues 61-77 (YMLVLWINTVLRAYLLL). Over 78–121 (ADHDRYLALIQKLTEAYYDLLNLNDSYISEILDQVNKVGKLMAR) the chain is Cytoplasmic. The helical transmembrane segment at 122-142 (GNLFFGMLTSMGFGLYPLSSS) threads the bilayer. Residues 143 to 176 (ERVLPFGSKIPGLNEYESPYYEMWYIFQMLITPM) lie on the Extracellular side of the membrane. The chain crosses the membrane as a helical span at residues 177–197 (GCCMYIPYTSLIVGLIMFGIV). Residues 198–251 (RCKALQHRLRQVALKHPYGDRDPRELREEIIACIRYQQSIIEYMDHINELTTMM) lie on the Cytoplasmic side of the membrane. A helical membrane pass occupies residues 252-272 (FLFELMAFSALLCALLFMLII). Residues 273–278 (VSGTSQ) are Extracellular-facing. Residues 279–299 (LIIVCMYINMILAQILALYWY) traverse the membrane as a helical segment. The Cytoplasmic segment spans residues 300–342 (ANELREQNLAVATAAYETEWFTFDVPLRKNILFMMMRAQRPAA). Residues 343 to 363 (ILLGNIRPITLELFQNLLNTT) form a helical membrane-spanning segment. Residues 364-375 (YTFFTVLKRVYG) are Extracellular-facing.

This sequence belongs to the insect chemoreceptor superfamily. Heteromeric odorant receptor channel (TC 1.A.69) family. Or30a subfamily. Interacts with Orco. Complexes exist early in the endomembrane system in olfactory sensory neurons (OSNs), coupling these complexes to the conserved ciliary trafficking pathway. Expressed in olfactory sensory neurons in the antenna.

The protein localises to the cell membrane. Odorant receptor which mediates acceptance or avoidance behavior, depending on its substrates. The odorant receptor repertoire encodes a large collection of odor stimuli that vary widely in identity, intensity, and duration. May form a complex with Orco to form odorant-sensing units, providing sensitive and prolonged odorant signaling and calcium permeability. This is Odorant receptor 49b (Or49b) from Drosophila melanogaster (Fruit fly).